Here is a 211-residue protein sequence, read N- to C-terminus: Peptidyl-tRNA hydrolase (211 aa).

Tyrosine 17 is a tRNA binding site. The active-site Proton acceptor is the histidine 22. Positions 79, 81, and 127 each coordinate tRNA.

Belongs to the PTH family. Monomer.

The protein localises to the cytoplasm. It catalyses the reaction an N-acyl-L-alpha-aminoacyl-tRNA + H2O = an N-acyl-L-amino acid + a tRNA + H(+). Functionally, hydrolyzes ribosome-free peptidyl-tRNAs (with 1 or more amino acids incorporated), which drop off the ribosome during protein synthesis, or as a result of ribosome stalling. In terms of biological role, catalyzes the release of premature peptidyl moieties from peptidyl-tRNA molecules trapped in stalled 50S ribosomal subunits, and thus maintains levels of free tRNAs and 50S ribosomes. The sequence is that of Peptidyl-tRNA hydrolase from Solidesulfovibrio magneticus (strain ATCC 700980 / DSM 13731 / RS-1) (Desulfovibrio magneticus).